The following is a 257-amino-acid chain: Zinc transporter ZupT (257 aa).

A run of 3 helical transmembrane segments spans residues 5–25, 32–52, and 61–81; these read LILT…GVLG, LLAF…LMEM, and GMSP…YFGL. Residues Asn120 and Glu123 each contribute to the Fe(2+) site. Zn(2+) contacts are provided by Glu123 and His148. The next 4 helical transmembrane spans lie at 137 to 157, 171 to 191, 195 to 215, and 236 to 256; these read LGFG…LAVA, ILWA…AWLI, MISP…MVAL, and GVLC…TVGI. Residues Asn149, Glu152, and Glu181 each contribute to the Fe(2+) site. Position 152 (Glu152) interacts with Zn(2+).

Belongs to the ZIP transporter (TC 2.A.5) family. ZupT subfamily.

It is found in the cell inner membrane. It carries out the reaction Zn(2+)(in) = Zn(2+)(out). Mediates zinc uptake. May also transport other divalent cations. The polypeptide is Zinc transporter ZupT (Escherichia coli O81 (strain ED1a)).